A 641-amino-acid polypeptide reads, in one-letter code: Leucine-rich repeat receptor-like serine/threonine/tyrosine-protein kinase SOBIR1 (641 aa).

The signal sequence occupies residues 1–31; that stretch reads MAVPTGSANLFLRPLILAVLSFLLLSSFVSS. At 32–284 the chain is on the extracellular side; it reads VEWLDIDSSD…KKKKSKKKKV (253 aa). LRR repeat units follow at residues 112–133, 136–159, 160–182, 183–205, and 207–228; these read ELKE…DILS, QLEV…SSLS, RLRI…KNLR, NLEN…IVSF, and NLRF…VMSS. A glycan (N-linked (GlcNAc...) asparagine) is linked at N154. Residue N186 is glycosylated (N-linked (GlcNAc...) asparagine). The disordered stretch occupies residues 243–278; that stretch reads AETPTSSPTNKPNNSTTSKAPKGAPKPGKLKKKKKK. The span at 245–259 shows a compositional bias: polar residues; the sequence is TPTSSPTNKPNNSTT. An N-linked (GlcNAc...) asparagine glycan is attached at N256. Residues 260 to 269 show a composition bias toward low complexity; that stretch reads SKAPKGAPKP. Residues 285 to 305 traverse the membrane as a helical segment; that stretch reads AAWILGFVVGAIGGTISGFVF. Residues 306 to 641 lie on the Cytoplasmic side of the membrane; that stretch reads SVLFKLIIQA…VRTMLSQIKH (336 aa). Residues 347 to 641 enclose the Protein kinase domain; it reads LASLEIIGRG…VRTMLSQIKH (295 aa). Residues 353–361 and K377 each bind ATP; that span reads IGRGGCGEV. The Proton acceptor role is filled by D489.

This sequence belongs to the protein kinase superfamily. Ser/Thr protein kinase family. As to quaternary structure, interacts with CST. Interacts with RLP23. Component of a trimeric complex composed of RLP23, SOBIR1 and BAK1. BAK1 is recruited into a pre-formed RLP23-SOBIR1 complex in a ligand-dependent manner. In terms of processing, autophosphorylated on Ser, Thr and Tyr residues. As to expression, mostly present in leaves and flowers, with increasing expression in older flowers.

The protein resides in the cell membrane. It carries out the reaction L-seryl-[protein] + ATP = O-phospho-L-seryl-[protein] + ADP + H(+). The enzyme catalyses L-threonyl-[protein] + ATP = O-phospho-L-threonyl-[protein] + ADP + H(+). It catalyses the reaction L-tyrosyl-[protein] + ATP = O-phospho-L-tyrosyl-[protein] + ADP + H(+). Functionally, dual specificity kinase acting on both serine/threonine- and tyrosine-containing substrates. Acting as a counterplayer of BIR1, promotes the activation of plant defense and cell death. Component of the RLP23-SOBIR1-BAK1 complex that mediates NLP-triggered immunity. Functions as an inhibitor/regulator of abscission, probably by regulating membrane trafficking during abscission. The protein is Leucine-rich repeat receptor-like serine/threonine/tyrosine-protein kinase SOBIR1 (SOBIR1) of Arabidopsis thaliana (Mouse-ear cress).